Reading from the N-terminus, the 427-residue chain is MLDIKWIRENPEALDAALAKRGAEPLAQSLVALDEKRRSAVQKAQDLLSRRNLASKEIGAAMAQKNSELAEKLKAEVSELKTLLPAIEEEDRQLTAELNDALSRIPNIPFDDVPVGKDEHDNIVTRTVGEKPRWNHAPKEHFEIGEALGYMDFERAAKLSGSRFTVLTGPLARLERALGQFMIDLHTSEHGYIEVSSPLMVRDEAVYGTAQLPKFAEDLFRTTDGRWLIPTAEVTLTNLVREEILDQEKLPLRFTALTPSFRSEAGSAGRDTRGMLRQHQFWKCELVSITDAESAVAEHERMTACAEEVLKRLGLHFRTMTLCTGDMGFGSRKTYDLEVWLPGQNAFREISSCSVCGDFQGRRMNARYRGKDDKSNKFVHTLNGSGTAVGRCLIAVLENYLNEDGSVTIPDVLLPYMGGLTKIERAA.

231–233 (TAE) contributes to the L-serine binding site. Residue 262 to 264 (RSE) participates in ATP binding. An L-serine-binding site is contributed by glutamate 285. 349–352 (EISS) lines the ATP pocket. L-serine is bound at residue serine 385.

This sequence belongs to the class-II aminoacyl-tRNA synthetase family. Type-1 seryl-tRNA synthetase subfamily. In terms of assembly, homodimer. The tRNA molecule binds across the dimer.

The protein resides in the cytoplasm. The enzyme catalyses tRNA(Ser) + L-serine + ATP = L-seryl-tRNA(Ser) + AMP + diphosphate + H(+). The catalysed reaction is tRNA(Sec) + L-serine + ATP = L-seryl-tRNA(Sec) + AMP + diphosphate + H(+). It participates in aminoacyl-tRNA biosynthesis; selenocysteinyl-tRNA(Sec) biosynthesis; L-seryl-tRNA(Sec) from L-serine and tRNA(Sec): step 1/1. Its function is as follows. Catalyzes the attachment of serine to tRNA(Ser). Is also able to aminoacylate tRNA(Sec) with serine, to form the misacylated tRNA L-seryl-tRNA(Sec), which will be further converted into selenocysteinyl-tRNA(Sec). The chain is Serine--tRNA ligase from Rhizobium johnstonii (strain DSM 114642 / LMG 32736 / 3841) (Rhizobium leguminosarum bv. viciae).